The chain runs to 341 residues: Probable GDP-mannose transporter 2 (341 aa).

Residues 1–11 (MSKHKHEWTES) lie on the Cytoplasmic side of the membrane. A helical membrane pass occupies residues 12-32 (VANSGPASILSYCASSILMTV). Topologically, residues 33–46 (TNKFVVNLDNFNMN) are lumenal. A helical transmembrane segment spans residues 47-67 (FVMLFVQSLVCTVTLCILRIV). At 68-85 (GVANFRSLNRTDVKNWFP) the chain is on the cytoplasmic side. A helical membrane pass occupies residues 86 to 106 (ISLLLVLMIYTSLKSLQYLAV). A topological domain (lumenal) is located at residue proline 107. The chain crosses the membrane as a helical span at residues 108–128 (IYTIFKNLTIILIAYGEVLFF). Over 129-139 (GGKVTSMELTS) the chain is Cytoplasmic. A helical transmembrane segment spans residues 140–160 (FIMMVLSSVVATWGDQQAIAI). Residues 161–176 (KASSLEDLDQELVEST) lie on the Lumenal side of the membrane. A helical membrane pass occupies residues 177–197 (IFVLNPGYLWMFTNCISSALF). The Cytoplasmic portion of the chain corresponds to 198 to 214 (VLIMRKRIRLTNFKDYD). A helical transmembrane segment spans residues 215–235 (TMFYNNVLALPLLLVFSFIME). Topologically, residues 236-251 (DWSTKNLSVNLSADSL) are lumenal. Asparagine 241 and asparagine 245 each carry an N-linked (GlcNAc...) asparagine glycan. A helical membrane pass occupies residues 252 to 272 (AAMVISGLMSVGISYCSGWCV). The Cytoplasmic segment spans residues 273–278 (RVTSST). Residues 279-299 (TYSMVGALNKLPIALAGLVFF) traverse the membrane as a helical segment. Topologically, residues 300–303 (DAPK) are lumenal. A helical transmembrane segment spans residues 304 to 324 (NFLSFFSIFLGFLSGLLYAVA). Residues 325 to 341 (KQKKIQQQKVLAATLEK) are Cytoplasmic-facing.

The protein belongs to the TPT transporter family. SLC35D subfamily.

It localises to the golgi apparatus membrane. It is found in the cytoplasmic vesicle membrane. The protein resides in the endoplasmic reticulum membrane. Involved in the import of GDP-mannose from the cytoplasm into the Golgi lumen. The polypeptide is Probable GDP-mannose transporter 2 (HVG1) (Saccharomyces cerevisiae (strain Lalvin EC1118 / Prise de mousse) (Baker's yeast)).